A 1241-amino-acid polypeptide reads, in one-letter code: ATP-dependent helicase/nuclease subunit A (1241 aa).

Residues serine 12–arginine 485 form the UvrD-like helicase ATP-binding domain. Alanine 33–threonine 40 contributes to the ATP binding site. A UvrD-like helicase C-terminal domain is found at glycine 505 to glycine 805.

It belongs to the helicase family. AddA subfamily. In terms of assembly, heterodimer of AddA and AddB/RexB. It depends on Mg(2+) as a cofactor.

The enzyme catalyses Couples ATP hydrolysis with the unwinding of duplex DNA by translocating in the 3'-5' direction.. It catalyses the reaction ATP + H2O = ADP + phosphate + H(+). The heterodimer acts as both an ATP-dependent DNA helicase and an ATP-dependent, dual-direction single-stranded exonuclease. Recognizes the chi site generating a DNA molecule suitable for the initiation of homologous recombination. The AddA nuclease domain is required for chi fragment generation; this subunit has the helicase and 3' -&gt; 5' nuclease activities. This chain is ATP-dependent helicase/nuclease subunit A, found in Bacillus cereus (strain Q1).